A 391-amino-acid chain; its full sequence is MSLQPRDVVIVDYARTPMGRSKNGCYRNVRADDLSADLITGLLARNAALDPAQIDDMIWGCVMQRGEQGFNVARNILLRAGLPHTVPAQTVNRLCGSSMSALHTAAANIMAGLGDVYLVGGVEHMGHIDMNQHVDPNPALGHSVAQAAGSMGLTAEYLSLLHGITREAMDEFGARSHRKAAEATEQGKFAREIIARIGHDETGAPTLIKHDETIRPDTTVEALSKLKPAFNPKGGTVTAGTSSQITDGASSMLVMSAAKAAELGLTPIAKIRSMALAGVDPSIMGYGPVPATQKALANAGLSIEDIDVVELNEAFAAQALPVLKDLNLLDAMEDKVNLYGGAIALGHPFGCSGTRITGTLLSVMQDKDATLGVSTMCIGLGQGITTIVERV.

The active-site Acyl-thioester intermediate is the C95. Residues H347 and C377 each act as proton acceptor in the active site.

Belongs to the thiolase-like superfamily. Thiolase family. Heterotetramer of two alpha chains (FadB) and two beta chains (FadA).

The protein resides in the cytoplasm. It carries out the reaction an acyl-CoA + acetyl-CoA = a 3-oxoacyl-CoA + CoA. The protein operates within lipid metabolism; fatty acid beta-oxidation. Catalyzes the final step of fatty acid oxidation in which acetyl-CoA is released and the CoA ester of a fatty acid two carbons shorter is formed. The chain is 3-ketoacyl-CoA thiolase from Saccharophagus degradans (strain 2-40 / ATCC 43961 / DSM 17024).